The sequence spans 209 residues: Uracil phosphoribosyltransferase (209 aa).

5-phospho-alpha-D-ribose 1-diphosphate contacts are provided by residues Arg79, Arg104, and 131–139 (DPMLATGNS). Residues Ile194 and 199-201 (GDA) each bind uracil. Asp200 contributes to the 5-phospho-alpha-D-ribose 1-diphosphate binding site.

This sequence belongs to the UPRTase family. The cofactor is Mg(2+).

It carries out the reaction UMP + diphosphate = 5-phospho-alpha-D-ribose 1-diphosphate + uracil. Its pathway is pyrimidine metabolism; UMP biosynthesis via salvage pathway; UMP from uracil: step 1/1. Allosterically activated by GTP. Functionally, catalyzes the conversion of uracil and 5-phospho-alpha-D-ribose 1-diphosphate (PRPP) to UMP and diphosphate. This chain is Uracil phosphoribosyltransferase, found in Variovorax paradoxus (strain S110).